Reading from the N-terminus, the 365-residue chain is Histidinol-phosphate aminotransferase (365 aa).

The residue at position 221 (K221) is an N6-(pyridoxal phosphate)lysine.

It belongs to the class-II pyridoxal-phosphate-dependent aminotransferase family. Histidinol-phosphate aminotransferase subfamily. Homodimer. It depends on pyridoxal 5'-phosphate as a cofactor.

It catalyses the reaction L-histidinol phosphate + 2-oxoglutarate = 3-(imidazol-4-yl)-2-oxopropyl phosphate + L-glutamate. The protein operates within amino-acid biosynthesis; L-histidine biosynthesis; L-histidine from 5-phospho-alpha-D-ribose 1-diphosphate: step 7/9. The sequence is that of Histidinol-phosphate aminotransferase from Rhodopseudomonas palustris (strain HaA2).